A 295-amino-acid polypeptide reads, in one-letter code: Bifunctional protein FolD (295 aa).

NADP(+) contacts are provided by residues Gly166 to Ser168, Ser195, and Ile236.

Belongs to the tetrahydrofolate dehydrogenase/cyclohydrolase family. As to quaternary structure, homodimer.

It carries out the reaction (6R)-5,10-methylene-5,6,7,8-tetrahydrofolate + NADP(+) = (6R)-5,10-methenyltetrahydrofolate + NADPH. The enzyme catalyses (6R)-5,10-methenyltetrahydrofolate + H2O = (6R)-10-formyltetrahydrofolate + H(+). It participates in one-carbon metabolism; tetrahydrofolate interconversion. Its function is as follows. Catalyzes the oxidation of 5,10-methylenetetrahydrofolate to 5,10-methenyltetrahydrofolate and then the hydrolysis of 5,10-methenyltetrahydrofolate to 10-formyltetrahydrofolate. In Chlorobium phaeobacteroides (strain DSM 266 / SMG 266 / 2430), this protein is Bifunctional protein FolD.